The primary structure comprises 152 residues: Snaclec anticoagulant protein subunit A (152 aa).

A signal peptide spans 1-23; that stretch reads MGRFIFVSFGLLVVYLSLSGTAA. In terms of domain architecture, C-type lectin spans 24–152; it reads DCSSSWSSYE…EQRDPFVCEA (129 aa). Intrachain disulfides connect Cys25-Cys36, Cys53-Cys150, and Cys125-Cys142. Ca(2+) contacts are provided by Ser64, Glu66, and Glu70. Glu151 contributes to the Ca(2+) binding site.

This sequence belongs to the snaclec family. In terms of assembly, heterodimer of subunits A and B; disulfide-linked. Expressed by the venom gland.

The protein resides in the secreted. Anticoagulant protein which binds to the gamma-carboxyglutamic acid-domain regions of factors IX and factor X in the presence of calcium with a 1 to 1 stoichiometry. Also inhibits platelet aggregation by binding to platelet glycoprotein Ibalpha (GP1BA) and functioning as a blocker of vWF. Is devoid of hemorrhagic and lethal activities. Possesses antithrombotic and thrombolytic activities. Also hydrolyzes the Aalpha-chain of fibrinogen. Does not affect the Bbeta-chain and the gamma chain. This Deinagkistrodon acutus (Hundred-pace snake) protein is Snaclec anticoagulant protein subunit A.